The chain runs to 390 residues: Zinc transporter 8 (390 aa).

The first 25 residues, M1–G25, serve as a signal peptide directing secretion. N4 carries an N-linked (GlcNAc...) asparagine glycan. Topologically, residues D26–K50 are extracellular. The helical transmembrane segment at I51 to G71 threads the bilayer. At R72–D82 the chain is on the cytoplasmic side. A helical transmembrane segment spans residues V83–I103. Residues L104–E124 are Extracellular-facing. N-linked (GlcNAc...) asparagine glycosylation occurs at N110. The chain crosses the membrane as a helical span at residues F125–L145. The Cytoplasmic segment spans residues A146 to R235. The disordered stretch occupies residues V165–E199. Residues V236–L256 traverse the membrane as a helical segment. Over G257–P267 the chain is Extracellular. The helical transmembrane segment at L268 to V288 threads the bilayer. At Q289 to S296 the chain is on the cytoplasmic side. A helical transmembrane segment spans residues I297–G317. Over I318 to A329 the chain is Extracellular. N-linked (GlcNAc...) asparagine glycosylation is present at N323. A helical membrane pass occupies residues L330–V350. Residues D351–Q369 are Cytoplasmic-facing. The helical transmembrane segment at L370 to A390 threads the bilayer.

Belongs to the ZIP transporter (TC 2.A.5) family.

It is found in the cell membrane. In terms of biological role, zinc transporter that may mediate zinc uptake from the rhizosphere and may be responsible for the translocation of zinc within the plant. The polypeptide is Zinc transporter 8 (ZIP8) (Oryza sativa subsp. japonica (Rice)).